The primary structure comprises 351 residues: Large ribosomal subunit protein uL3 (351 aa).

Disordered regions lie at residues 1 to 31 (MGHR…TPRT) and 246 to 271 (KGSR…GQLG).

This sequence belongs to the universal ribosomal protein uL3 family. In terms of assembly, part of the 50S ribosomal subunit. Forms a cluster with proteins L14 and L24e.

Its function is as follows. One of the primary rRNA binding proteins, it binds directly near the 3'-end of the 23S rRNA, where it nucleates assembly of the 50S subunit. In Saccharolobus solfataricus (strain ATCC 35092 / DSM 1617 / JCM 11322 / P2) (Sulfolobus solfataricus), this protein is Large ribosomal subunit protein uL3.